The chain runs to 396 residues: 8-amino-7-oxononanoate synthase (396 aa).

Arg19 contacts substrate. Gly106–Tyr107 contacts pyridoxal 5'-phosphate. His131 is a binding site for substrate. Pyridoxal 5'-phosphate is bound by residues Ser176, His204, and Thr233. Position 236 is an N6-(pyridoxal phosphate)lysine (Lys236). Thr350 lines the substrate pocket.

This sequence belongs to the class-II pyridoxal-phosphate-dependent aminotransferase family. BioF subfamily. Homodimer. It depends on pyridoxal 5'-phosphate as a cofactor.

The catalysed reaction is 6-carboxyhexanoyl-[ACP] + L-alanine + H(+) = (8S)-8-amino-7-oxononanoate + holo-[ACP] + CO2. The protein operates within cofactor biosynthesis; biotin biosynthesis. Functionally, catalyzes the decarboxylative condensation of pimeloyl-[acyl-carrier protein] and L-alanine to produce 8-amino-7-oxononanoate (AON), [acyl-carrier protein], and carbon dioxide. This chain is 8-amino-7-oxononanoate synthase, found in Pseudomonas savastanoi pv. phaseolicola (strain 1448A / Race 6) (Pseudomonas syringae pv. phaseolicola (strain 1448A / Race 6)).